Consider the following 623-residue polypeptide: Lamin-B2.L (623 aa).

Positions M1–A18 are enriched in low complexity. The tract at residues M1–I30 is disordered. The interval A2–P27 is head. Over residues R19–I30 the composition is skewed to polar residues. At S26 the chain carries Phosphoserine. Positions T28 to M64 are coil 1A. The region spanning E35–L391 is the IF rod domain. A linker 1 region spans residues M64–T74. The tract at residues T75 to R211 is coil 1B. Residues K212–R235 form a linker 2 region. The coil 2 stretch occupies residues G236 to N378. The tail stretch occupies residues Y380–E592. Disordered stretches follow at residues E388–Q473 and V591–M623. S396 is modified (phosphoserine). Residues E398 to T416 are compositionally biased toward low complexity. A Nuclear localization signal motif is present at residues K420–E425. A compositionally biased stretch (polar residues) spans L443–Q473. One can recognise an LTD domain in the interval F468–K585. Residues E592–E604 show a composition bias toward acidic residues. Polar residues predominate over residues D612–M623. The residue at position 620 (C620) is a Cysteine methyl ester. Residue C620 is the site of S-farnesyl cysteine attachment. Positions S621–M623 are cleaved as a propeptide — removed in mature form.

Belongs to the intermediate filament family. In terms of processing, phosphorylation plays a key role in lamin organization, subcellular localization and nuclear envelope disintegration. Phosphorylation by CDK1 at Ser-26 at the onset of mitosis drives lamin disassembly and nuclear envelope breakdown.

Its subcellular location is the nucleus lamina. The protein resides in the nucleus envelope. The protein localises to the nucleus. It localises to the nucleoplasm. It is found in the nucleus matrix. In terms of biological role, lamins are intermediate filament proteins that assemble into a filamentous meshwork, and which constitute the major components of the nuclear lamina, a fibrous layer on the nucleoplasmic side of the inner nuclear membrane. Lamins provide a framework for the nuclear envelope, bridging the nuclear envelope and chromatin, thereby playing an important role in nuclear assembly, chromatin organization, nuclear membrane and telomere dynamics. The structural integrity of the lamina is strictly controlled by the cell cycle, as seen by the disintegration and formation of the nuclear envelope in prophase and telophase, respectively. This Xenopus laevis (African clawed frog) protein is Lamin-B2.L (lmnb2.L).